The sequence spans 225 residues: UPF0173 metal-dependent hydrolase PH1671 (225 aa).

The protein belongs to the UPF0173 family.

This chain is UPF0173 metal-dependent hydrolase PH1671, found in Pyrococcus horikoshii (strain ATCC 700860 / DSM 12428 / JCM 9974 / NBRC 100139 / OT-3).